A 369-amino-acid polypeptide reads, in one-letter code: D-glucosaminate-6-phosphate ammonia lyase (369 aa).

Lys-213 carries the post-translational modification N6-(pyridoxal phosphate)lysine.

It belongs to the SelA family. Requires pyridoxal 5'-phosphate as cofactor.

It carries out the reaction 2-amino-2-deoxy-D-gluconate 6-phosphate = 2-dehydro-3-deoxy-6-phospho-D-gluconate + NH4(+). Functionally, involved in the catabolism of D-glucosaminate. Catalyzes the conversion of D-glucosaminate 6-phosphate to yield keto-3-deoxygluconate 6-phosphate (KDGP). The sequence is that of D-glucosaminate-6-phosphate ammonia lyase from Salmonella typhimurium (strain 14028s / SGSC 2262).